Here is a 724-residue protein sequence, read N- to C-terminus: Catalase-peroxidase (724 aa).

Positions 98–226 form a cross-link, tryptophyl-tyrosyl-methioninium (Trp-Tyr) (with M-252); it reads WHSAGTYRIA…LATVMMGLIY (129 aa). Residue His99 is the Proton acceptor of the active site. The tryptophyl-tyrosyl-methioninium (Tyr-Met) (with W-98) cross-link spans 226–252; sequence YVNPEGVDGNPDPLKTAQDMRVTFARM. A heme b-binding site is contributed by His267.

This sequence belongs to the peroxidase family. Peroxidase/catalase subfamily. In terms of assembly, homodimer or homotetramer. Heme b is required as a cofactor. Post-translationally, formation of the three residue Trp-Tyr-Met cross-link is important for the catalase, but not the peroxidase activity of the enzyme.

The enzyme catalyses H2O2 + AH2 = A + 2 H2O. It catalyses the reaction 2 H2O2 = O2 + 2 H2O. Functionally, bifunctional enzyme with both catalase and broad-spectrum peroxidase activity. The sequence is that of Catalase-peroxidase from Vibrio cholerae serotype O1 (strain ATCC 39541 / Classical Ogawa 395 / O395).